The following is a 238-amino-acid chain: Probable transcriptional regulatory protein SMU_1789c (238 aa).

Belongs to the TACO1 family. YeeN subfamily.

Its subcellular location is the cytoplasm. The polypeptide is Probable transcriptional regulatory protein SMU_1789c (Streptococcus mutans serotype c (strain ATCC 700610 / UA159)).